Reading from the N-terminus, the 1076-residue chain is DNA-directed RNA polymerase subunit beta (1076 aa).

This sequence belongs to the RNA polymerase beta chain family. As to quaternary structure, in plastids the minimal PEP RNA polymerase catalytic core is composed of four subunits: alpha, beta, beta', and beta''. When a (nuclear-encoded) sigma factor is associated with the core the holoenzyme is formed, which can initiate transcription.

It is found in the plastid. Its subcellular location is the chloroplast. It catalyses the reaction RNA(n) + a ribonucleoside 5'-triphosphate = RNA(n+1) + diphosphate. Its function is as follows. DNA-dependent RNA polymerase catalyzes the transcription of DNA into RNA using the four ribonucleoside triphosphates as substrates. In Triticum aestivum (Wheat), this protein is DNA-directed RNA polymerase subunit beta.